A 194-amino-acid chain; its full sequence is Oligoribonuclease (194 aa).

In terms of domain architecture, Exonuclease spans 11–174 (LIWIDLEMTG…SDVRDSIDEL (164 aa)). Residue Tyr-132 is part of the active site.

Belongs to the oligoribonuclease family.

It localises to the cytoplasm. Functionally, 3'-to-5' exoribonuclease specific for small oligoribonucleotides. This chain is Oligoribonuclease, found in Xanthomonas axonopodis pv. citri (strain 306).